The chain runs to 146 residues: Hemoglobin subunit beta (146 aa).

Position 1 is an N-acetylvaline (Val1). The 145-residue stretch at 2-146 (HMTDAEKKLV…VANALAHKYH (145 aa)) folds into the Globin domain. The residue at position 12 (Thr12) is a Phosphothreonine. Lys59 is subject to N6-acetyllysine. His63 contacts heme b. At Lys82 the chain carries N6-acetyllysine. Heme b is bound at residue His92. Cys93 bears the S-nitrosocysteine mark. At Lys144 the chain carries N6-acetyllysine.

The protein belongs to the globin family. In terms of assembly, tetramer of two alpha and two different beta chains. Two external cysteine residues at beta-16 and beta-52 cause reversible polymerization to octamers and most likely irreversible formation of higher polymers. Red blood cells.

Its function is as follows. Involved in oxygen transport from the lung to the various peripheral tissues. The protein is Hemoglobin subunit beta (HBB) of Echinops telfairi (Lesser hedgehog tenrec).